A 163-amino-acid chain; its full sequence is Transcriptional repressor NrdR (163 aa).

Residues 3 to 34 (CVQCGHLEDKVIDSRMSKDGTTIRRRRVCLRC) fold into a zinc finger. Residues 49–139 (LRVVKRDNLR…VYRQFSNVEE (91 aa)) form the ATP-cone domain.

It belongs to the NrdR family. The cofactor is Zn(2+).

Negatively regulates transcription of bacterial ribonucleotide reductase nrd genes and operons by binding to NrdR-boxes. This is Transcriptional repressor NrdR from Akkermansia muciniphila (strain ATCC BAA-835 / DSM 22959 / JCM 33894 / BCRC 81048 / CCUG 64013 / CIP 107961 / Muc).